Reading from the N-terminus, the 249-residue chain is Thioesterase TesA (249 aa).

Residues Ser92, Asp196, and His224 contribute to the active site.

This sequence belongs to the thioesterase family.

The enzyme catalyses a fatty acyl-CoA + H2O = a fatty acid + CoA + H(+). Its function is as follows. Involved in the synthesis of both phthiocerol dimycocerosates (PDIMs) and phenolic glycolipids (PGLs), which are structurally related lipids non-covalently bound to the outer cell wall layer of M.tuberculosis and are important virulence factors. The polypeptide is Thioesterase TesA (Mycobacterium marinum (strain ATCC BAA-535 / M)).